A 262-amino-acid chain; its full sequence is Expansin-A13 (262 aa).

An N-terminal signal peptide occupies residues 1-22 (MAGVARMLAAVVCAIMPAAAMA). One can recognise an Expansin-like EG45 domain in the interval 52–167 (GGACGYGNLY…QRVPCMKKGG (116 aa)). Positions 177-257 (YFQLVLLTNV…GWRFGQTFAS (81 aa)) constitute an Expansin-like CBD domain.

Belongs to the expansin family. Expansin A subfamily. Expressed in roots and flowers.

The protein localises to the secreted. It localises to the cell wall. Its subcellular location is the membrane. Functionally, may cause loosening and extension of plant cell walls by disrupting non-covalent bonding between cellulose microfibrils and matrix glucans. No enzymatic activity has been found. May be required for rapid internodal elongation in deepwater rice during submergence. In Oryza sativa subsp. japonica (Rice), this protein is Expansin-A13 (EXPA13).